A 643-amino-acid chain; its full sequence is Threonine--tRNA ligase (643 aa).

In terms of domain architecture, TGS spans 1–61; it reads MPIITLPDGS…EQDATLEIIT (61 aa). The tract at residues 243–534 is catalytic; sequence DHRKIGKALD…ITEEYAGFFP (292 aa). The Zn(2+) site is built by cysteine 334, histidine 385, and histidine 511.

It belongs to the class-II aminoacyl-tRNA synthetase family. As to quaternary structure, homodimer. The cofactor is Zn(2+).

It is found in the cytoplasm. It catalyses the reaction tRNA(Thr) + L-threonine + ATP = L-threonyl-tRNA(Thr) + AMP + diphosphate + H(+). In terms of biological role, catalyzes the attachment of threonine to tRNA(Thr) in a two-step reaction: L-threonine is first activated by ATP to form Thr-AMP and then transferred to the acceptor end of tRNA(Thr). Also edits incorrectly charged L-seryl-tRNA(Thr). This is Threonine--tRNA ligase from Haemophilus influenzae (strain ATCC 51907 / DSM 11121 / KW20 / Rd).